Reading from the N-terminus, the 319-residue chain is Lipase 1 (319 aa).

The active-site Nucleophile is serine 189. Ca(2+) is bound by residues aspartate 314 and aspartate 317.

The enzyme catalyses a triacylglycerol + H2O = a diacylglycerol + a fatty acid + H(+). This is Lipase 1 (lip1) from Moraxella sp. (strain TA144).